Reading from the N-terminus, the 364-residue chain is Spermidine/putrescine import ATP-binding protein PotA (364 aa).

Residues 6 to 236 form the ABC transporter domain; sequence IEIRQIYKSY…PANLHVAMFI (231 aa). 38 to 45 contacts ATP; that stretch reads GPSGCGKT.

The protein belongs to the ABC transporter superfamily. Spermidine/putrescine importer (TC 3.A.1.11.1) family. In terms of assembly, the complex is composed of two ATP-binding proteins (PotA), two transmembrane proteins (PotB and PotC) and a solute-binding protein (PotD).

The protein resides in the cell inner membrane. It catalyses the reaction ATP + H2O + polyamine-[polyamine-binding protein]Side 1 = ADP + phosphate + polyamineSide 2 + [polyamine-binding protein]Side 1.. Part of the ABC transporter complex PotABCD involved in spermidine/putrescine import. Responsible for energy coupling to the transport system. The protein is Spermidine/putrescine import ATP-binding protein PotA of Legionella pneumophila (strain Lens).